Here is a 319-residue protein sequence, read N- to C-terminus: Tyrosine phosphatase-like protein N3 (319 aa).

One can recognise a Tyrosine-protein phosphatase domain in the interval 7–285 (SNLSIHEFWR…LIINKILLHS (279 aa)).

The protein belongs to the protein-tyrosine phosphatase family.

This Microplitis demolitor bracovirus (isolate Webb) (MdBV) protein is Tyrosine phosphatase-like protein N3 (N7).